The following is a 106-amino-acid chain: UPF0060 membrane protein Bxeno_B1021 (106 aa).

The next 4 helical transmembrane spans lie at 2 to 22 (KTFLLYAVTAVAEIVGCYLPW), 30 to 50 (SIWLLVPGALSLALFAWLLTL), 58 to 78 (VYAAYGGVYVAVAIAWLWCVD), and 82 to 102 (PTLWDAAGVVFTLAGMAIIAF).

The protein belongs to the UPF0060 family.

It localises to the cell inner membrane. This chain is UPF0060 membrane protein Bxeno_B1021, found in Paraburkholderia xenovorans (strain LB400).